The chain runs to 604 residues: Putative JmjC domain-containing protein L887 (604 aa).

The JmjC domain occupies 1-127 (MNNMKKIIII…PNNKLNLIQP (127 aa)). A helical transmembrane segment spans residues 4–24 (MKKIIIISIIIIIIIVLLFYI).

It is found in the membrane. The sequence is that of Putative JmjC domain-containing protein L887 from Acanthamoeba polyphaga (Amoeba).